Reading from the N-terminus, the 499-residue chain is Salviol synthase (499 aa).

A helical membrane pass occupies residues 4 to 24 (HIPSLVLCISFFIFFKIVSKL). Cys436 contributes to the heme binding site.

The protein belongs to the cytochrome P450 family. Heme serves as cofactor. In terms of tissue distribution, expressed in leaf glandular trichomes.

It localises to the membrane. It carries out the reaction ferruginol + reduced [NADPH--hemoprotein reductase] + O2 = salviol + oxidized [NADPH--hemoprotein reductase] + H2O + H(+). The protein operates within secondary metabolite biosynthesis; terpenoid biosynthesis. Functionally, monooxygenase involved in the biosynthesis of labdane-related diterpenes natural products. Catalyzes the oxidation of ferruginol to produce salviol. Salviol is an intermediate in the biosynthesis of carnosate, a potent antioxidant. The protein is Salviol synthase of Salvia pomifera (Apple sage).